A 197-amino-acid chain; its full sequence is Translation machinery-associated protein 22 (197 aa).

The region spanning 103-174 is the SUI1 domain; that stretch reads IRIKRVERNK…DVREFLIKNY (72 aa).

This sequence belongs to the DENR family. Interacts with the 40S ribosomal subunit.

The protein resides in the cytoplasm. In Botryotinia fuckeliana (strain B05.10) (Noble rot fungus), this protein is Translation machinery-associated protein 22 (tma22).